Reading from the N-terminus, the 194-residue chain is Auxin-induced protein 22A (194 aa).

The EAR-like (transcriptional repression) signature appears at 13–17 (LRLGL). Residues 40-62 (EIDDVGDENSSSGGGGDRKMENK) form a disordered region. Positions 85–173 (KMYVKVSMDG…KRLRIMKRAD (89 aa)) constitute a PB1 domain.

Belongs to the Aux/IAA family. Homodimers and heterodimers.

Its subcellular location is the nucleus. Its function is as follows. Aux/IAA proteins are short-lived transcriptional factors that function as repressors of early auxin response genes at low auxin concentrations. Repression is thought to result from the interaction with auxin response factors (ARFs), proteins that bind to the auxin-responsive promoter element (AuxRE). Formation of heterodimers with ARF proteins may alter their ability to modulate early auxin response genes expression. The chain is Auxin-induced protein 22A (AUX22A) from Vigna radiata var. radiata (Mung bean).